We begin with the raw amino-acid sequence, 723 residues long: Aspartate--tRNA(Asp/Asn) ligase 1 (723 aa).

E206 provides a ligand contact to L-aspartate. Residues 230–233 (QLFK) are aspartate. R252 is an L-aspartate binding site. ATP contacts are provided by residues 252-254 (RDE) and Q261. H481 serves as a coordination point for L-aspartate. Position 516 (E516) interacts with ATP. Position 523 (R523) interacts with L-aspartate. 568–571 (GMDR) contributes to the ATP binding site.

This sequence belongs to the class-II aminoacyl-tRNA synthetase family. Type 1 subfamily. In terms of assembly, homodimer.

It is found in the cytoplasm. The enzyme catalyses tRNA(Asx) + L-aspartate + ATP = L-aspartyl-tRNA(Asx) + AMP + diphosphate. In terms of biological role, aspartyl-tRNA synthetase with relaxed tRNA specificity since it is able to aspartylate not only its cognate tRNA(Asp) but also tRNA(Asn). Reaction proceeds in two steps: L-aspartate is first activated by ATP to form Asp-AMP and then transferred to the acceptor end of tRNA(Asp/Asn). The protein is Aspartate--tRNA(Asp/Asn) ligase 1 of Syntrophus aciditrophicus (strain SB).